The following is a 361-amino-acid chain: 3-dehydroquinate synthase (361 aa).

This sequence belongs to the archaeal-type DHQ synthase family.

It carries out the reaction 2-amino-2,3,7-trideoxy-D-lyxo-hept-6-ulosonate + NAD(+) + H2O = 3-dehydroquinate + NH4(+) + NADH + H(+). Catalyzes the oxidative deamination and cyclization of 2-amino-3,7-dideoxy-D-threo-hept-6-ulosonic acid (ADH) to yield 3-dehydroquinate (DHQ), which is fed into the canonical shikimic pathway of aromatic amino acid biosynthesis. In Methanococcus maripaludis (strain C5 / ATCC BAA-1333), this protein is 3-dehydroquinate synthase.